The sequence spans 207 residues: Proteasome subunit beta (207 aa).

A propeptide spans 1 to 7 (MVEAFKG) (removed in mature form; by autocatalysis). The Nucleophile role is filled by Thr8.

Belongs to the peptidase T1B family. As to quaternary structure, the 20S proteasome core is composed of 14 alpha and 14 beta subunits that assemble into four stacked heptameric rings, resulting in a barrel-shaped structure. The two inner rings, each composed of seven catalytic beta subunits, are sandwiched by two outer rings, each composed of seven alpha subunits. The catalytic chamber with the active sites is on the inside of the barrel. Has a gated structure, the ends of the cylinder being occluded by the N-termini of the alpha-subunits. Is capped at one or both ends by the proteasome regulatory ATPase, PAN.

Its subcellular location is the cytoplasm. It carries out the reaction Cleavage of peptide bonds with very broad specificity.. The formation of the proteasomal ATPase PAN-20S proteasome complex, via the docking of the C-termini of PAN into the intersubunit pockets in the alpha-rings, triggers opening of the gate for substrate entry. Interconversion between the open-gate and close-gate conformations leads to a dynamic regulation of the 20S proteasome proteolysis activity. In terms of biological role, component of the proteasome core, a large protease complex with broad specificity involved in protein degradation. This is Proteasome subunit beta from Methanothrix thermoacetophila (strain DSM 6194 / JCM 14653 / NBRC 101360 / PT) (Methanosaeta thermophila).